The primary structure comprises 198 residues: Phosphoheptose isomerase (198 aa).

Positions 40–198 (IVTALRSGRK…IEAALMQDLS (159 aa)) constitute an SIS domain. 55-57 (NGG) is a binding site for substrate. Residues H64 and E68 each contribute to the Zn(2+) site. Residues E68, 97–98 (ND), 123–125 (STS), S128, and Q175 each bind substrate. Zn(2+) is bound by residues Q175 and H183.

Belongs to the SIS family. GmhA subfamily. As to quaternary structure, homotetramer. Requires Zn(2+) as cofactor.

Its subcellular location is the cytoplasm. The enzyme catalyses 2 D-sedoheptulose 7-phosphate = D-glycero-alpha-D-manno-heptose 7-phosphate + D-glycero-beta-D-manno-heptose 7-phosphate. It participates in carbohydrate biosynthesis; D-glycero-D-manno-heptose 7-phosphate biosynthesis; D-glycero-alpha-D-manno-heptose 7-phosphate and D-glycero-beta-D-manno-heptose 7-phosphate from sedoheptulose 7-phosphate: step 1/1. Functionally, catalyzes the isomerization of sedoheptulose 7-phosphate in D-glycero-D-manno-heptose 7-phosphate. This Bradyrhizobium sp. (strain BTAi1 / ATCC BAA-1182) protein is Phosphoheptose isomerase.